The sequence spans 238 residues: Aspartate/glutamate leucyltransferase (238 aa).

This sequence belongs to the R-transferase family. Bpt subfamily.

The protein localises to the cytoplasm. The enzyme catalyses N-terminal L-glutamyl-[protein] + L-leucyl-tRNA(Leu) = N-terminal L-leucyl-L-glutamyl-[protein] + tRNA(Leu) + H(+). It catalyses the reaction N-terminal L-aspartyl-[protein] + L-leucyl-tRNA(Leu) = N-terminal L-leucyl-L-aspartyl-[protein] + tRNA(Leu) + H(+). Functionally, functions in the N-end rule pathway of protein degradation where it conjugates Leu from its aminoacyl-tRNA to the N-termini of proteins containing an N-terminal aspartate or glutamate. This is Aspartate/glutamate leucyltransferase from Nitrosococcus oceani (strain ATCC 19707 / BCRC 17464 / JCM 30415 / NCIMB 11848 / C-107).